We begin with the raw amino-acid sequence, 60 residues long: Large ribosomal subunit protein uL30 (60 aa).

It belongs to the universal ribosomal protein uL30 family. Part of the 50S ribosomal subunit.

The protein is Large ribosomal subunit protein uL30 of Streptococcus pyogenes serotype M1.